The following is a 1677-amino-acid chain: Zinc finger protein 831 (1677 aa).

The span at 1–26 (MEVPEPTCPAPPARDQPAPTPGPPGA) shows a compositional bias: pro residues. A disordered region spans residues 1 to 43 (MEVPEPTCPAPPARDQPAPTPGPPGAPGGQASPHLTLGPVLLP). 2 C2H2-type zinc fingers span residues 144–166 (YLCPHCGRDCLKPSVLEKHIRSH) and 172–196 (FPCATCGIAFKTQSNLYKHRRTQTH). Disordered stretches follow at residues 193–250 (TQTH…SPGA), 270–398 (GSAF…AGLE), 516–557 (WLEP…PSGH), 663–931 (EAAG…VLSA), 950–1062 (TPLP…TCEA), 1100–1119 (NWELGEPPGNAPEDPSSGPL), 1137–1176 (LTRPQGVPPGWPELALSSHSGTSRSHSTRSPHSTQNPFPS), 1216–1243 (LRDEGPNGPPGSNGGWTWTSPGEGGPAQ), 1510–1597 (SAES…GQYG), and 1620–1677 (LITR…VIEI). Basic and acidic residues-rich tracts occupy residues 216–232 (EGDKAGEPPRPEGRGES) and 325–341 (KPWDAKAPEGRLRKCES). Residues 376–385 (EGGPGPGPGV) are compositionally biased toward gly residues. A coiled-coil region spans residues 391 to 423 (GAREAGLELEKKRLEERIAQLISHNQAVVDDAQ). Basic and acidic residues-rich tracts occupy residues 517–526 (LEPREPRDPW), 674–684 (QDRRTPVHEDI), 707–727 (PTKHGETVARRGDSDRPRVEE), and 813–834 (SGEDKLPSERKKLKVEDLHSWK). 2 stretches are compositionally biased toward low complexity: residues 880–894 (LESSGASLAAASVAL) and 905–919 (PLHPAAPAPAEHPSL). Over residues 1153 to 1170 (SSHSGTSRSHSTRSPHST) the composition is skewed to low complexity. Residues 1518 to 1531 (QTAGRTLTSSSPDS) are compositionally biased toward polar residues. Positions 1649 to 1662 (RSLEGMRKQTRVEF) are enriched in basic and acidic residues.

This Homo sapiens (Human) protein is Zinc finger protein 831 (ZNF831).